A 265-amino-acid chain; its full sequence is Glutamate racemase (265 aa).

Residues 9 to 10 (DS) and 41 to 42 (YS) contribute to the substrate site. The active-site Proton donor/acceptor is cysteine 73. 74-75 (NT) is a substrate binding site. Cysteine 184 functions as the Proton donor/acceptor in the catalytic mechanism. A substrate-binding site is contributed by 185-186 (TH).

It belongs to the aspartate/glutamate racemases family.

It catalyses the reaction L-glutamate = D-glutamate. It functions in the pathway cell wall biogenesis; peptidoglycan biosynthesis. Provides the (R)-glutamate required for cell wall biosynthesis. In Actinobacillus pleuropneumoniae serotype 5b (strain L20), this protein is Glutamate racemase.